Here is a 1185-residue protein sequence, read N- to C-terminus: AT-rich interactive domain-containing protein 5B (1185 aa).

Disordered regions lie at residues 248–281 (PNLK…ESKA), 413–550 (KGEE…PDED), 713–742 (ISKK…PIAI), 883–932 (HQQE…EGKG), and 1033–1058 (HLPK…LHGL). Over residues 252-261 (GRPRKKKPCP) the composition is skewed to basic residues. An ARID domain is found at 321–413 (RADEQAFLVA…LILPYERFIK (93 aa)). Positions 447 to 461 (IKNENQKSKKEKDNA) are enriched in basic and acidic residues. The span at 462–471 (QKPQDASEVS) shows a compositional bias: polar residues. Positions 473–487 (EQEKDQESADQKNFT) are enriched in basic and acidic residues. A compositionally biased stretch (basic and acidic residues) spans 1034–1053 (LPKETSVKEKVPDAEGEGSK).

Belongs to the ARID5B family.

The protein resides in the nucleus. Transcription coactivator that binds to the 5'-AATA[CT]-3' core sequence and plays a key role in adipogenesis and liver development. Required for adipogenesis: regulates triglyceride metabolism in adipocytes by regulating expression of adipogenic genes. This chain is AT-rich interactive domain-containing protein 5B (ARID5B), found in Gallus gallus (Chicken).